A 177-amino-acid chain; its full sequence is Adenine phosphoribosyltransferase (177 aa).

The protein belongs to the purine/pyrimidine phosphoribosyltransferase family. As to quaternary structure, homodimer.

The protein resides in the cytoplasm. The enzyme catalyses AMP + diphosphate = 5-phospho-alpha-D-ribose 1-diphosphate + adenine. Its pathway is purine metabolism; AMP biosynthesis via salvage pathway; AMP from adenine: step 1/1. Its function is as follows. Catalyzes a salvage reaction resulting in the formation of AMP, that is energically less costly than de novo synthesis. The chain is Adenine phosphoribosyltransferase from Leptospira interrogans serogroup Icterohaemorrhagiae serovar copenhageni (strain Fiocruz L1-130).